The chain runs to 1510 residues: Chromosome partition protein MukB (1510 aa).

75-82 (GGNGAGKS) provides a ligand contact to ATP. The stretch at 346–706 (QHRLVDLSRE…LDEQISRLSQ (361 aa)) forms a coiled coil. Residues 707-824 (PDGSEDPRLN…EIPLFGCAAR (118 aa)) are flexible hinge. Coiled coils occupy residues 825 to 1154 (EKRL…AAKV) and 1248 to 1304 (IDAI…LQNI).

This sequence belongs to the SMC family. MukB subfamily. Homodimerization via its hinge domain. Binds to DNA via its C-terminal region. Interacts, and probably forms a ternary complex, with MukE and MukF via its C-terminal region. The complex formation is stimulated by calcium or magnesium. Interacts with tubulin-related protein FtsZ.

The protein localises to the cytoplasm. It localises to the nucleoid. Functionally, plays a central role in chromosome condensation, segregation and cell cycle progression. Functions as a homodimer, which is essential for chromosome partition. Involved in negative DNA supercoiling in vivo, and by this means organize and compact chromosomes. May achieve or facilitate chromosome segregation by condensation DNA from both sides of a centrally located replisome during cell division. The sequence is that of Chromosome partition protein MukB from Haemophilus influenzae (strain ATCC 51907 / DSM 11121 / KW20 / Rd).